Reading from the N-terminus, the 99-residue chain is Small ribosomal subunit protein uS19 (99 aa).

The protein belongs to the universal ribosomal protein uS19 family.

Its function is as follows. Protein S19 forms a complex with S13 that binds strongly to the 16S ribosomal RNA. The chain is Small ribosomal subunit protein uS19 from Sulfurihydrogenibium sp. (strain YO3AOP1).